We begin with the raw amino-acid sequence, 357 residues long: S-adenosylmethionine:tRNA ribosyltransferase-isomerase (357 aa).

Belongs to the QueA family. In terms of assembly, monomer.

The protein resides in the cytoplasm. It carries out the reaction 7-aminomethyl-7-carbaguanosine(34) in tRNA + S-adenosyl-L-methionine = epoxyqueuosine(34) in tRNA + adenine + L-methionine + 2 H(+). The protein operates within tRNA modification; tRNA-queuosine biosynthesis. Functionally, transfers and isomerizes the ribose moiety from AdoMet to the 7-aminomethyl group of 7-deazaguanine (preQ1-tRNA) to give epoxyqueuosine (oQ-tRNA). This chain is S-adenosylmethionine:tRNA ribosyltransferase-isomerase, found in Phenylobacterium zucineum (strain HLK1).